The following is a 423-amino-acid chain: Ferrochelatase, mitochondrial (423 aa).

The transit peptide at 1-54 (MRSLGANMAAALRAAGVLLRDPLASSSWRVCQPWRWKSGAAAAAVTTETAQHAQ) directs the protein to the mitochondrion. Position 57 is an N6-acetyllysine (Lys-57). Protoporphyrin IX is bound by residues Arg-115, Tyr-123, and Ser-130. Lys-138 is modified (N6-succinyllysine). Position 196 (Cys-196) interacts with [2Fe-2S] cluster. Catalysis depends on residues His-230 and Asp-383. Positions 403, 406, and 411 each coordinate [2Fe-2S] cluster. N6-acetyllysine; alternate is present on Lys-415. Lys-415 is modified (N6-succinyllysine; alternate).

It belongs to the ferrochelatase family. In terms of assembly, homodimer. Homotetramer. Interacts with PGRMC1; the interaction results in decreased FECH activity. Interacts with ABCB10 and SLC25A37; this interaction forms an oligomeric complex. Forms a complex with ABCB7 and ABCB10, where a dimeric FECH bridges ABCB7 and ABCB10 homodimers; this complex may be required for cellular iron homeostasis, mitochondrial function and heme biosynthesis. Interacts with ABCB7 and ABCB10. Requires [2Fe-2S] cluster as cofactor.

The protein resides in the mitochondrion inner membrane. It catalyses the reaction heme b + 2 H(+) = protoporphyrin IX + Fe(2+). Its pathway is porphyrin-containing compound metabolism; protoheme biosynthesis; protoheme from protoporphyrin-IX: step 1/1. With respect to regulation, inhibited by nitric oxide (NO). The 2Fe-2S cluster could act as a NO sensor. Catalyzes the ferrous insertion into protoporphyrin IX and participates in the terminal step in the heme biosynthetic pathway. The chain is Ferrochelatase, mitochondrial from Homo sapiens (Human).